The following is a 427-amino-acid chain: 3-phosphoshikimate 1-carboxyvinyltransferase (427 aa).

3-phosphoshikimate is bound by residues K20, S21, and R25. K20 is a binding site for phosphoenolpyruvate. Phosphoenolpyruvate is bound by residues G92 and R120. Residues S166, Q168, D312, and K339 each contribute to the 3-phosphoshikimate site. Q168 provides a ligand contact to phosphoenolpyruvate. D312 (proton acceptor) is an active-site residue. Phosphoenolpyruvate contacts are provided by R343 and R385.

Belongs to the EPSP synthase family. As to quaternary structure, monomer.

It is found in the cytoplasm. It carries out the reaction 3-phosphoshikimate + phosphoenolpyruvate = 5-O-(1-carboxyvinyl)-3-phosphoshikimate + phosphate. It functions in the pathway metabolic intermediate biosynthesis; chorismate biosynthesis; chorismate from D-erythrose 4-phosphate and phosphoenolpyruvate: step 6/7. Its function is as follows. Catalyzes the transfer of the enolpyruvyl moiety of phosphoenolpyruvate (PEP) to the 5-hydroxyl of shikimate-3-phosphate (S3P) to produce enolpyruvyl shikimate-3-phosphate and inorganic phosphate. This chain is 3-phosphoshikimate 1-carboxyvinyltransferase, found in Streptococcus thermophilus (strain ATCC BAA-491 / LMD-9).